A 183-amino-acid polypeptide reads, in one-letter code: Hypoxanthine-guanine phosphoribosyltransferase (183 aa).

2 residues coordinate diphosphate: Arg47 and Gly48. Residues Glu103 and Asp104 each coordinate Mg(2+). Catalysis depends on Asp107, which acts as the Proton acceptor. Residues Lys134, 155–156, and Asp162 each bind GMP; that span reads FV. Arg168 is a binding site for diphosphate.

This sequence belongs to the purine/pyrimidine phosphoribosyltransferase family. Mg(2+) is required as a cofactor.

Its subcellular location is the cytoplasm. The catalysed reaction is IMP + diphosphate = hypoxanthine + 5-phospho-alpha-D-ribose 1-diphosphate. It carries out the reaction GMP + diphosphate = guanine + 5-phospho-alpha-D-ribose 1-diphosphate. It functions in the pathway purine metabolism; IMP biosynthesis via salvage pathway; IMP from hypoxanthine: step 1/1. Its pathway is purine metabolism; GMP biosynthesis via salvage pathway; GMP from guanine: step 1/1. Functionally, purine salvage pathway enzyme that catalyzes the transfer of the ribosyl-5-phosphate group from 5-phospho-alpha-D-ribose 1-diphosphate (PRPP) to the N9 position of the 6-oxopurines hypoxanthine and guanine to form the corresponding ribonucleotides IMP (inosine 5'-monophosphate) and GMP (guanosine 5'-monophosphate), with the release of PPi. This chain is Hypoxanthine-guanine phosphoribosyltransferase (hpt), found in Lactococcus lactis subsp. lactis (strain IL1403) (Streptococcus lactis).